A 456-amino-acid polypeptide reads, in one-letter code: Aromatic amino acid transport protein AroP (456 aa).

Over 1-18 (MEGQQHGEQLKRGLKNRH) the chain is Cytoplasmic. A helical transmembrane segment spans residues 19-39 (IQLIALGGAIGTGLFLGSASV). The Periplasmic segment spans residues 40 to 41 (IQ). The helical transmembrane segment at 42 to 62 (SAGPGIILGYAIAGFIAFLIM) threads the bilayer. Topologically, residues 63–85 (RQLGEMVVEEPVAGSFSHFAYKY) are cytoplasmic. Residues 86 to 106 (WGSFAGFASGWNYWVLYVLVA) form a helical membrane-spanning segment. Residues 107 to 116 (MAELTAVGKY) are Periplasmic-facing. The chain crosses the membrane as a helical span at residues 117–137 (IQFWYPEIPTWVSAAVFFVVI). Residues 138-154 (NAINLTNVKVFGEMEFW) are Cytoplasmic-facing. A helical membrane pass occupies residues 155–175 (FAIIKVIAVVAMIIFGAWLLF). The Periplasmic portion of the chain corresponds to 176–200 (SGNGGPQASVSNLWDQGGFLPHGFT). A helical transmembrane segment spans residues 201 to 221 (GLVMMMAIIMFSFGGLELVGI). Over 222 to 239 (TAAEADNPEQSIPKATNQ) the chain is Cytoplasmic. Residues 240–260 (VIYRILIFYIGSLAVLLSLMP) traverse the membrane as a helical segment. Residues 261-270 (WTRVTADTSP) lie on the Periplasmic side of the membrane. Residues 271–291 (FVLIFHELGDTFVANALNIVV) traverse the membrane as a helical segment. Topologically, residues 292 to 332 (LTAALSVYNSCVYCNSRMLFGLAQQGNAPKALASVDKRGVP) are cytoplasmic. A helical membrane pass occupies residues 333-353 (VNTILVSALVTALCVLINYLA). At 354–357 (PESA) the chain is on the periplasmic side. A helical transmembrane segment spans residues 358-378 (FGLLMALVVSALVINWAMISL). The Cytoplasmic segment spans residues 379 to 398 (AHMKFRRAKQEQGVVTRFPA). The chain crosses the membrane as a helical span at residues 399–419 (LLYPLGNWICLLFMAAVLVIM). The Periplasmic segment spans residues 420–424 (LMTPG). Residues 425–445 (MAISVYLIPVWLIVLGIGYLF) traverse the membrane as a helical segment. At 446 to 456 (KEKTAKAVKAH) the chain is on the cytoplasmic side.

This sequence belongs to the amino acid-polyamine-organocation (APC) superfamily. Amino acid transporter (AAT) (TC 2.A.3.1) family.

The protein resides in the cell inner membrane. The catalysed reaction is L-phenylalanine(in) + H(+)(in) = L-phenylalanine(out) + H(+)(out). It carries out the reaction L-tryptophan(in) + H(+)(in) = L-tryptophan(out) + H(+)(out). It catalyses the reaction L-tyrosine(in) + H(+)(in) = L-tyrosine(out) + H(+)(out). In terms of biological role, permease that is involved in the active transport across the cytoplasmic membrane of all three aromatic amino acids, phenylalanine, tyrosine and tryptophan. The chain is Aromatic amino acid transport protein AroP (aroP) from Escherichia coli O6:H1 (strain CFT073 / ATCC 700928 / UPEC).